A 62-amino-acid polypeptide reads, in one-letter code: MKVNDRVTVKTDGGPRRPGVVLAVEEFSEGTMYLVALEDYPLGIWFFNEAGHQDGIFVEKAE.

This sequence belongs to the DsrB family.

This chain is Protein DsrB, found in Shigella flexneri serotype 5b (strain 8401).